A 565-amino-acid polypeptide reads, in one-letter code: NAD-dependent malic enzyme (565 aa).

The Proton donor role is filled by Tyr-104. NAD(+) is bound at residue Arg-157. The active-site Proton acceptor is the Lys-175. A divalent metal cation-binding residues include Glu-246, Asp-247, and Asp-270. NAD(+) is bound by residues Asp-270 and Asn-418.

This sequence belongs to the malic enzymes family. In terms of assembly, homotetramer. Requires Mg(2+) as cofactor. Mn(2+) is required as a cofactor.

The catalysed reaction is (S)-malate + NAD(+) = pyruvate + CO2 + NADH. The enzyme catalyses oxaloacetate + H(+) = pyruvate + CO2. The chain is NAD-dependent malic enzyme from Proteus mirabilis (strain HI4320).